We begin with the raw amino-acid sequence, 273 residues long: Large ribosomal subunit protein uL2 (273 aa).

The segment at 224-260 (AMNPVDHPHGGGEGKTSGGRHPVTPWGKKTKGKKTRK) is disordered. Over residues 251 to 260 (KKTKGKKTRK) the composition is skewed to basic residues.

It belongs to the universal ribosomal protein uL2 family. In terms of assembly, part of the 50S ribosomal subunit. Forms a bridge to the 30S subunit in the 70S ribosome.

Its function is as follows. One of the primary rRNA binding proteins. Required for association of the 30S and 50S subunits to form the 70S ribosome, for tRNA binding and peptide bond formation. It has been suggested to have peptidyltransferase activity; this is somewhat controversial. Makes several contacts with the 16S rRNA in the 70S ribosome. The chain is Large ribosomal subunit protein uL2 from Orientia tsutsugamushi (strain Ikeda) (Rickettsia tsutsugamushi).